The following is a 598-amino-acid chain: Peroxisomal targeting signal receptor (598 aa).

Disordered regions lie at residues 1 to 54 (MSFM…GEMS), 135 to 154 (RGGSPAEAMQQQGPGPMQGG), and 208 to 237 (AVGKGKEVEEQTAETATATETVTETETTTE). Residues 9–22 (ECSTGRNPLSQFTK) are compositionally biased toward polar residues. Residue C10 forms a Glycyl cysteine thioester (Cys-Gly) (interchain with G-Cter in ubiquitin) linkage. K22 is covalently cross-linked (Glycyl lysine isopeptide (Lys-Gly) (interchain with G-Cter in ubiquitin)). The span at 23 to 35 (HTAEDRSLQHDRV) shows a compositional bias: basic and acidic residues. Low complexity predominate over residues 220–233 (AETATATETVTETE). TPR repeat units follow at residues 304-337 (PDPFKIGVELMETGGRLSEAALAFEAAVQKNTEH), 338-371 (AEAWGRLGACQAQNEKEDPAIRALERCIKLEPGN), 372-409 (LSALMNLSVSYTNEGYENAAYATLERWLATKYPEVVDQ), 410-447 (ARNQEPRLGNEDKFQLHSRVTELFIRAAQLSPDGANID), 448-481 (ADVQVGLGVLFYGNEEYDKAIDCFNAAIAVRPDD), 482-515 (ALLWNRLGATLANSHRSEEAIDAYYKALELRPSF), and 516-549 (VRARYNLGVSCINIGCYKEAAQYLLGALSMHKVE).

This sequence belongs to the peroxisomal targeting signal receptor family. Ubiquitination at Cys-10 is UBC4-independent but requires the presence of PEX4. Ubiquitination at Lys-22 is UBC4-dependent.

It is found in the cytoplasm. The protein localises to the peroxisome membrane. Functionally, binds to the C-terminal PTS1-type tripeptide peroxisomal targeting signal (SKL-type) and plays an essential role in peroxisomal protein import. The chain is Peroxisomal targeting signal receptor (PAY32) from Yarrowia lipolytica (strain CLIB 122 / E 150) (Yeast).